We begin with the raw amino-acid sequence, 66 residues long: Repressor protein C4 (66 aa).

Functionally, repressor of the ant/reb gene. The chain is Repressor protein C4 (C4) from Escherichia phage P1 (Bacteriophage P1).